We begin with the raw amino-acid sequence, 404 residues long: Cysteine desulfurase IscS (404 aa).

Residues 73–74 (AT), N153, Q181, and 201–203 (SAH) each bind pyridoxal 5'-phosphate. The residue at position 204 (K204) is an N6-(pyridoxal phosphate)lysine. Pyridoxal 5'-phosphate is bound at residue T241. The active-site Cysteine persulfide intermediate is C327. C327 contacts [2Fe-2S] cluster.

This sequence belongs to the class-V pyridoxal-phosphate-dependent aminotransferase family. NifS/IscS subfamily. Homodimer. Forms a heterotetramer with IscU, interacts with other sulfur acceptors. Pyridoxal 5'-phosphate is required as a cofactor.

The protein resides in the cytoplasm. It catalyses the reaction (sulfur carrier)-H + L-cysteine = (sulfur carrier)-SH + L-alanine. It participates in cofactor biosynthesis; iron-sulfur cluster biosynthesis. In terms of biological role, master enzyme that delivers sulfur to a number of partners involved in Fe-S cluster assembly, tRNA modification or cofactor biosynthesis. Catalyzes the removal of elemental sulfur atoms from cysteine to produce alanine. Functions as a sulfur delivery protein for Fe-S cluster synthesis onto IscU, an Fe-S scaffold assembly protein, as well as other S acceptor proteins. The protein is Cysteine desulfurase IscS of Anaeromyxobacter sp. (strain K).